The sequence spans 221 residues: MELEERRAALDVRRLPGLTPYAEAWELQRELVRKRRSGEIPDTLLLLEHPPVYTVGRAARDASNLGAGEEYLRSLGAEVFWSDRGGDATFHGPGQLVGYPIIRLKVRDTHRYLRDLEEVVIRALAGYGLEGRRHPRYTGVWVNGSKICAIGVKFSSGWIASHGFALNVNTDLSWFDRITPCGIREYGVTSLERELGREIPLAGVEREIVSGFREVLGDPGS.

Positions 38-220 (GEIPDTLLLL…GFREVLGDPG (183 aa)) constitute a BPL/LPL catalytic domain. Substrate-binding positions include 84–91 (RGGDATFH), 149–151 (AIG), and 163–165 (GFA). The active-site Acyl-thioester intermediate is cysteine 181.

This sequence belongs to the LipB family.

The protein resides in the cytoplasm. The enzyme catalyses octanoyl-[ACP] + L-lysyl-[protein] = N(6)-octanoyl-L-lysyl-[protein] + holo-[ACP] + H(+). The protein operates within protein modification; protein lipoylation via endogenous pathway; protein N(6)-(lipoyl)lysine from octanoyl-[acyl-carrier-protein]: step 1/2. In terms of biological role, catalyzes the transfer of endogenously produced octanoic acid from octanoyl-acyl-carrier-protein onto the lipoyl domains of lipoate-dependent enzymes. Lipoyl-ACP can also act as a substrate although octanoyl-ACP is likely to be the physiological substrate. The chain is Octanoyltransferase from Rubrobacter xylanophilus (strain DSM 9941 / JCM 11954 / NBRC 16129 / PRD-1).